A 550-amino-acid polypeptide reads, in one-letter code: Centrosomal and chromosomal factor (550 aa).

Coiled-coil stretches lie at residues 20–44, 105–126, and 239–274; these read SALS…QQHH, VANS…QQQQ, and ATSA…QQAH. Disordered stretches follow at residues 21–145, 208–320, 361–380, and 392–465; these read ALSA…KDYS, LSSG…HAAN, SHYA…RDAM, and SGKL…SASV. Composition is skewed to low complexity over residues 24–71, 81–136, and 221–320; these read ALQQ…QQQQ, ANTS…NAAP, and AAVA…HAAN. Low complexity-rich tracts occupy residues 396–412 and 450–462; these read QQSQ…QQHC and SATP…SGGS.

As to quaternary structure, homodimer. Interacts with esc, Trl, E(z), scm and ph-p in vitro. Found in vivo in an esc-containing complex, which may be the Esc/E(z) complex. Also found in vivo in a Pc-containing complex that may be the PRC1 complex, but does not interact with Pc directly. Interacts with cyclin CycG.

The protein localises to the nucleus. It is found in the cytoplasm. It localises to the cytoskeleton. The protein resides in the microtubule organizing center. Its subcellular location is the centrosome. The protein localises to the chromosome. In terms of biological role, essential protein required for proper condensation of mitotic chromosomes and progression through mitosis. Binds to specific polytene chromosome sites, many of which are shared with the posterior sex combs (Psc) protein. Involved in maintaining Abd-B repression outside its normal expression domain. In Drosophila melanogaster (Fruit fly), this protein is Centrosomal and chromosomal factor (corto).